The sequence spans 63 residues: uncharacterized protein (63 aa).

Its subcellular location is the mitochondrion. This is an uncharacterized protein from Marchantia polymorpha (Common liverwort).